The following is a 334-amino-acid chain: Formamidase (334 aa).

The CN hydrolase domain maps to Phe14 to Pro260. The Proton acceptor role is filled by Glu60. Catalysis depends on Lys133, which acts as the Proton donor. Catalysis depends on Cys166, which acts as the Nucleophile.

This sequence belongs to the carbon-nitrogen hydrolase superfamily. Aliphatic amidase family.

It carries out the reaction formamide + H2O = formate + NH4(+). Functionally, is an aliphatic amidase with a restricted substrate specificity, as it only hydrolyzes formamide. This is Formamidase from Helicobacter pylori (strain G27).